We begin with the raw amino-acid sequence, 383 residues long: Acetylornithine deacetylase (383 aa).

H80 serves as a coordination point for Zn(2+). Residue D82 is part of the active site. D112 contacts Zn(2+). E144 is an active-site residue. Zn(2+)-binding residues include E145, E169, and H355.

This sequence belongs to the peptidase M20A family. ArgE subfamily. Homodimer. Zn(2+) serves as cofactor. It depends on Co(2+) as a cofactor. The cofactor is glutathione.

It is found in the cytoplasm. It carries out the reaction N(2)-acetyl-L-ornithine + H2O = L-ornithine + acetate. Its pathway is amino-acid biosynthesis; L-arginine biosynthesis; L-ornithine from N(2)-acetyl-L-ornithine (linear): step 1/1. Catalyzes the hydrolysis of the amide bond of N(2)-acetylated L-amino acids. Cleaves the acetyl group from N-acetyl-L-ornithine to form L-ornithine, an intermediate in L-arginine biosynthesis pathway, and a branchpoint in the synthesis of polyamines. In Escherichia coli O8 (strain IAI1), this protein is Acetylornithine deacetylase.